The following is a 464-amino-acid chain: 3-deoxy-D-manno-octulosonic acid transferase (464 aa).

Residues 2-22 form a helical; Signal-anchor membrane-spanning segment; the sequence is MLLYYALSFILLPIYFIIILI. In terms of domain architecture, RPE1 insert spans 47-93; it reads YSLDFLHNEANKERFKGDTERRTAAYTSVREDSSTGSTSKLPLEASY. Glu107 (proton acceptor) is an active-site residue. CMP-binding positions include 311–312, 352–354, and 377–380; these read PR, FGE, and NILE.

The protein belongs to the glycosyltransferase group 1 family.

It localises to the cell inner membrane. It catalyses the reaction lipid IVA (E. coli) + CMP-3-deoxy-beta-D-manno-octulosonate = alpha-Kdo-(2-&gt;6)-lipid IVA (E. coli) + CMP + H(+). Its pathway is bacterial outer membrane biogenesis; LPS core biosynthesis. In terms of biological role, involved in lipopolysaccharide (LPS) biosynthesis. Catalyzes the transfer of 3-deoxy-D-manno-octulosonate (Kdo) residue(s) from CMP-Kdo to lipid IV(A), the tetraacyldisaccharide-1,4'-bisphosphate precursor of lipid A. The polypeptide is 3-deoxy-D-manno-octulosonic acid transferase (waaA) (Rickettsia felis (strain ATCC VR-1525 / URRWXCal2) (Rickettsia azadi)).